Reading from the N-terminus, the 1141-residue chain is MARYTQRPENALKRANEFIEVGKPLRALDTLQEVFRNKRWNYAYSETVIEPLMFKYLYLCVELKKSHIAKEGLFQYRNMFQLVNVNSLENVIRGYLKMAEEHTEAAQAQSSAAVAVLELDDLDNIATPESILMSAVCGEDAQDRSDRTILLPWVKFLWESYCQCLELLRVNTHCEALYHDIARMAFQFCLKYNRKSEFRRLCDKLRKHLEDICKSSNQTTGVSINKVETQQLCLDTRLYLLDSAIQMELWQEAYKAIEDIHGLMALSKKTPVPKTMANYYQKLAMVFSKAGNQLFHAAALLKLFQLTRELKKNLTKDDLQRMAAHVLLATLSIPLPSAHPEFDRFIEADKSPLEKAQKLAVLLGLPQPPTRVSLIREVVRLNVPQLVSEDFRNLYNWLEVDFNPLNLCKRIQSIVDFIENGPENALLTPYIQSLKDVTIMRLIRQISQVYESIKFQRLLQLASFCNIFELEKLLVESVRHNDMQIRIDHQKNSIYFGTDLTESQREYRPDGPALQSMPSEQIRSQLVNMSTVLTRAVSIVYPNRERDQRAKLRNQMVSQYHEIKDREHQRILQRQKIIEDRKEYIEKQNNAREEEEARRQEEESRKAKLAEQKRLEQEQEERERKRHQNEIQAIREKSLKEKVQQISQTAHGKKMLSKLDEEGIKKLDAEQIAKRESEELQREAKELQSKLKSQEKKIDYFERAKRLEEIPLFEKYLAEKQVKDKEFWEATEKTRIENAIAERMDAVAQQERLKRMYPDRDEFLEALKKERASLYVEKLKKFEAALEAERKKRLADRIVRRREERRQAFLREKEEERLRKEEEIRLAQAAEERAAAEARRLEREAEDEKRRAQYEKQRAKEEEAERKIKEDRDRLSRELASERERTEKERDTWRPRGGDRPSASAGGSSEWRRAAPAVSERNDRGGERIERGGDRVERGGERIERGGERIERGGDRDRKDNEGADSSWRVRREPDTQRAAAPKDSGAPQSRDDKWRRGGERDRDFRNDGARRDRDDGPRRDRDDGPRRDRDDERGGFRRNDGPRRTDEPQRESGGNWRDAPRHADRENRRPAGERRDRDVRETRGDQRGSAPKEAASGGGGGNWRNAPATREEKPAAKRDQAQEKENKAGDDGEWTSVKRR.

The region spanning 319–501 is the PCI domain; it reads LQRMAAHVLL…NSIYFGTDLT (183 aa). Basic and acidic residues-rich tracts occupy residues 588-623 and 829-899; these read QNNA…EERE and AAEE…RGGD. 2 disordered regions span residues 588-631 and 829-1141; these read QNNA…QNEI and AAEE…VKRR. Phosphoserine is present on serine 908. 4 stretches are compositionally biased toward basic and acidic residues: residues 920 to 976, 990 to 1051, 1059 to 1087, and 1110 to 1131; these read ERND…EPDT, SRDD…EPQR, DAPR…RGDQ, and TREE…KAGD.

This sequence belongs to the eIF-3 subunit A family. As to quaternary structure, component of the eukaryotic translation initiation factor 3 (eIF-3) complex. The eIF-3 complex interacts with pix.

It is found in the cytoplasm. Its function is as follows. RNA-binding component of the eukaryotic translation initiation factor 3 (eIF-3) complex, which is involved in protein synthesis of a specialized repertoire of mRNAs and, together with other initiation factors, stimulates binding of mRNA and methionyl-tRNAi to the 40S ribosome. The eIF-3 complex specifically targets and initiates translation of a subset of mRNAs involved in cell proliferation. The protein is Eukaryotic translation initiation factor 3 subunit A of Drosophila sechellia (Fruit fly).